Reading from the N-terminus, the 314-residue chain is 4-hydroxy-3-methylbut-2-enyl diphosphate reductase (314 aa).

Residue Cys12 participates in [4Fe-4S] cluster binding. (2E)-4-hydroxy-3-methylbut-2-enyl diphosphate is bound by residues His41 and His74. Dimethylallyl diphosphate-binding residues include His41 and His74. 2 residues coordinate isopentenyl diphosphate: His41 and His74. Cys96 serves as a coordination point for [4Fe-4S] cluster. His124 provides a ligand contact to (2E)-4-hydroxy-3-methylbut-2-enyl diphosphate. Dimethylallyl diphosphate is bound at residue His124. His124 provides a ligand contact to isopentenyl diphosphate. Glu126 serves as the catalytic Proton donor. Thr167 contacts (2E)-4-hydroxy-3-methylbut-2-enyl diphosphate. Cys197 provides a ligand contact to [4Fe-4S] cluster. 4 residues coordinate (2E)-4-hydroxy-3-methylbut-2-enyl diphosphate: Ser225, Ser226, Asn227, and Ser269. Dimethylallyl diphosphate-binding residues include Ser225, Ser226, Asn227, and Ser269. Ser225, Ser226, Asn227, and Ser269 together coordinate isopentenyl diphosphate.

The protein belongs to the IspH family. [4Fe-4S] cluster serves as cofactor.

It carries out the reaction isopentenyl diphosphate + 2 oxidized [2Fe-2S]-[ferredoxin] + H2O = (2E)-4-hydroxy-3-methylbut-2-enyl diphosphate + 2 reduced [2Fe-2S]-[ferredoxin] + 2 H(+). It catalyses the reaction dimethylallyl diphosphate + 2 oxidized [2Fe-2S]-[ferredoxin] + H2O = (2E)-4-hydroxy-3-methylbut-2-enyl diphosphate + 2 reduced [2Fe-2S]-[ferredoxin] + 2 H(+). It functions in the pathway isoprenoid biosynthesis; dimethylallyl diphosphate biosynthesis; dimethylallyl diphosphate from (2E)-4-hydroxy-3-methylbutenyl diphosphate: step 1/1. Its pathway is isoprenoid biosynthesis; isopentenyl diphosphate biosynthesis via DXP pathway; isopentenyl diphosphate from 1-deoxy-D-xylulose 5-phosphate: step 6/6. Its function is as follows. Catalyzes the conversion of 1-hydroxy-2-methyl-2-(E)-butenyl 4-diphosphate (HMBPP) into a mixture of isopentenyl diphosphate (IPP) and dimethylallyl diphosphate (DMAPP). Acts in the terminal step of the DOXP/MEP pathway for isoprenoid precursor biosynthesis. The polypeptide is 4-hydroxy-3-methylbut-2-enyl diphosphate reductase (Actinobacillus succinogenes (strain ATCC 55618 / DSM 22257 / CCUG 43843 / 130Z)).